Consider the following 168-residue polypeptide: Photosystem I assembly protein Ycf3 (168 aa).

TPR repeat units follow at residues 35 to 68 (AFTYYRDGMSAQSEGNYAEALQNYYEATRLEIDP), 72 to 105 (SYILYNIGLIHTSNGEHTKALEYYSRALERNPFL), and 120 to 153 (GEQAIRQGDSEIAEAWSDQAAEYWKQAIALTPGN).

Belongs to the Ycf3 family.

The protein resides in the plastid. It localises to the chloroplast thylakoid membrane. Its function is as follows. Essential for the assembly of the photosystem I (PSI) complex. May act as a chaperone-like factor to guide the assembly of the PSI subunits. This chain is Photosystem I assembly protein Ycf3, found in Buxus microphylla (Littleleaf boxwood).